The following is an 87-amino-acid chain: HssA/B-like protein 7 (87 aa).

Residues 1 to 22 (MSILSALTSISNPMKSTKSSVA) are compositionally biased toward polar residues. The segment at 1–23 (MSILSALTSISNPMKSTKSSVAN) is disordered.

Belongs to the hssA/B family.

This chain is HssA/B-like protein 7 (hssl7), found in Dictyostelium discoideum (Social amoeba).